A 544-amino-acid polypeptide reads, in one-letter code: Chaperonin GroEL 2 (544 aa).

ATP contacts are provided by residues 29-32, 86-90, glycine 413, 482-484, and aspartate 498; these read TLGP, DGTTT, and NVL.

Belongs to the chaperonin (HSP60) family. In terms of assembly, forms a cylinder of 14 subunits composed of two heptameric rings stacked back-to-back. Interacts with the co-chaperonin GroES.

The protein resides in the cytoplasm. The catalysed reaction is ATP + H2O + a folded polypeptide = ADP + phosphate + an unfolded polypeptide.. Functionally, together with its co-chaperonin GroES, plays an essential role in assisting protein folding. The GroEL-GroES system forms a nano-cage that allows encapsulation of the non-native substrate proteins and provides a physical environment optimized to promote and accelerate protein folding. The chain is Chaperonin GroEL 2 from Roseiflexus sp. (strain RS-1).